Consider the following 365-residue polypeptide: Ribosomal RNA large subunit methyltransferase M (365 aa).

S-adenosyl-L-methionine-binding positions include serine 188, 221 to 224 (CPGG), aspartate 240, aspartate 260, and aspartate 277. Lysine 306 serves as the catalytic Proton acceptor.

Belongs to the class I-like SAM-binding methyltransferase superfamily. RNA methyltransferase RlmE family. RlmM subfamily. Monomer.

It is found in the cytoplasm. The enzyme catalyses cytidine(2498) in 23S rRNA + S-adenosyl-L-methionine = 2'-O-methylcytidine(2498) in 23S rRNA + S-adenosyl-L-homocysteine + H(+). Functionally, catalyzes the 2'-O-methylation at nucleotide C2498 in 23S rRNA. The chain is Ribosomal RNA large subunit methyltransferase M from Proteus mirabilis (strain HI4320).